The primary structure comprises 110 residues: Hydrogenase maturation factor HypA (110 aa).

His2 is a Ni(2+) binding site. Residues Cys70, Cys73, Cys86, and Cys89 each contribute to the Zn(2+) site.

It belongs to the HypA/HybF family.

In terms of biological role, involved in the maturation of [NiFe] hydrogenases. Required for nickel insertion into the metal center of the hydrogenase. In Geobacter sulfurreducens (strain ATCC 51573 / DSM 12127 / PCA), this protein is Hydrogenase maturation factor HypA.